A 3574-amino-acid chain; its full sequence is Chromatin structure-remodeling complex protein SYD (3574 aa).

3 disordered regions span residues Ser-76–Asn-105, Thr-123–Asp-211, and Asp-328–Ser-372. Composition is skewed to polar residues over residues Ser-124–Arg-148 and Pro-155–His-168. The span at Asn-169–Ser-181 shows a compositional bias: basic and acidic residues. The segment covering Trp-194 to Phe-204 has biased composition (polar residues). Over residues Arg-358 to Ser-372 the composition is skewed to basic and acidic residues. In terms of domain architecture, HSA spans Gln-573 to Ile-647. In terms of domain architecture, Helicase ATP-binding spans Val-766 to Asn-933. ATP is bound at residue Asp-779–Thr-786. Residues Asp-884–His-887 carry the DEAH box motif. One can recognise a Helicase C-terminal domain in the interval Met-1077–Thr-1223. The Nuclear localization signal signature appears at Ala-1266–Asp-1273. 19 disordered regions span residues Lys-1342–Thr-1472, His-1500–Glu-1575, Ile-1588–His-1637, Gly-1690–Val-1811, Gln-1830–Asp-1868, Ser-2040–Asn-2068, Ser-2089–Val-2115, Ser-2143–Ile-2162, Leu-2179–Asp-2220, Glu-2235–Asp-2338, Glu-2350–Asp-2451, Phe-2517–Glu-2538, Ser-2684–Asp-2703, Ile-2718–Arg-2759, Asp-2865–Leu-2884, Glu-3017–Ser-3045, Asn-3189–Lys-3208, Val-3316–Met-3337, and Thr-3512–Val-3574. The span at Ala-1362–Lys-1371 shows a compositional bias: basic and acidic residues. 2 stretches are compositionally biased toward polar residues: residues Ser-1399–Thr-1426 and His-1500–Asp-1511. The segment covering Gly-1532–Gly-1546 has biased composition (basic residues). 2 stretches are compositionally biased toward polar residues: residues Gly-1555–Ala-1571 and Glu-1597–Thr-1614. Residues Arg-1617–Asp-1627 are compositionally biased toward basic and acidic residues. Composition is skewed to polar residues over residues Gly-1690–Ser-1699, Lys-1706–Glu-1752, Asp-1796–Thr-1806, His-1832–Gln-1849, Ser-2040–Ala-2057, and Ser-2090–Ser-2110. Residues Asp-2248–Val-2260 show a composition bias toward acidic residues. The span at Asp-2438–Asp-2451 shows a compositional bias: basic and acidic residues. Residues Ile-2718 to Gln-2735 are compositionally biased toward polar residues. Polar residues-rich tracts occupy residues Lys-3034–Ser-3045 and Asp-3191–Ser-3204. Over residues Lys-3523–Gly-3538 the composition is skewed to basic and acidic residues.

Belongs to the SNF2/RAD54 helicase family. As to quaternary structure, interacts with LFY. Binds to BARD1/ROW1. In terms of processing, phosphorylated. Mostly expressed in rapidly dividing cells in the vegetative, inflorescence, and root meristems, as well as in young leaf and flower primordia. Isoform 1 is predominantly found in seedlings whereas isoform 2 is present in both seedlings and inflorescences (at protein level).

It localises to the cytoplasm. The protein localises to the nucleus. Functionally, catalytic component of the chromatin structure-remodeling complex (RSC), which is involved in transcription regulation and nucleosome positioning. Controls stem cell fate via the transcription regulation of WUS in the shoot apical meristem, by modulating its promoter. LFY-dependent repressor of the meristem identity switch from vegetative to reproductive development probably by modulating chromatin state. Involved in the regulation of floral homeotic gene expression in response to environmental stimuli. Required for carpel and ovule development, and for cotyledon separation via the regulation of CUC2 transcription. Regulates the promoters of several genes downstream of the jasmonate (JA) and ethylene (ET) signaling pathways. Required for resistance against the necrotrophic pathogen B.cinerea but not the biotrophic pathogen P.syringae. The sequence is that of Chromatin structure-remodeling complex protein SYD (SYD) from Arabidopsis thaliana (Mouse-ear cress).